The chain runs to 294 residues: Cytidine deaminase (294 aa).

CMP/dCMP-type deaminase domains follow at residues 48-168 and 186-294; these read DEDA…FGPK and LTGD…VLLA. Residue 89 to 91 participates in substrate binding; sequence NME. His102 provides a ligand contact to Zn(2+). Catalysis depends on Glu104, which acts as the Proton donor. Zn(2+)-binding residues include Cys129 and Cys132.

It belongs to the cytidine and deoxycytidylate deaminase family. Homodimer. Zn(2+) is required as a cofactor.

It catalyses the reaction cytidine + H2O + H(+) = uridine + NH4(+). The catalysed reaction is 2'-deoxycytidine + H2O + H(+) = 2'-deoxyuridine + NH4(+). In terms of biological role, this enzyme scavenges exogenous and endogenous cytidine and 2'-deoxycytidine for UMP synthesis. The chain is Cytidine deaminase from Shigella dysenteriae serotype 1 (strain Sd197).